Reading from the N-terminus, the 115-residue chain is MPKSTNSVASKARRKRILNKAKGYWGSRGNVLTVVKHAVDKAEQYAYRDRRVKKRTFRSLWIMRINAAARQNGVSYSRLMDAIHKKNIEIDRKALAEIAVKDPEAFAMIVKSALD.

It belongs to the bacterial ribosomal protein bL20 family.

Functionally, binds directly to 23S ribosomal RNA and is necessary for the in vitro assembly process of the 50S ribosomal subunit. It is not involved in the protein synthesizing functions of that subunit. The sequence is that of Large ribosomal subunit protein bL20 from Chlorobaculum parvum (strain DSM 263 / NCIMB 8327) (Chlorobium vibrioforme subsp. thiosulfatophilum).